The sequence spans 146 residues: Protein ADM2 (146 aa).

A signal peptide spans methionine 1 to serine 25. The propeptide occupies glycine 26 to serine 96. The disordered stretch occupies residues glycine 29–proline 99. A disulfide bond links cysteine 108 and cysteine 113. Position 145 is a tyrosine amide (tyrosine 145).

It belongs to the adrenomedullin family. As to expression, expression was restricted to the intermediate and anterior lobes of the pituitary.

It is found in the secreted. Its function is as follows. Intermedin/ADM2 is a peptide hormone that plays a role as physiological regulator of gastrointestinal and cardiovascular bioactivities mediated by the CALCRL-RAMPs receptor complexes. Activates the cAMP-dependent pathway through interaction with CALCRL-RAMP3 receptor complex. This is Protein ADM2 from Rattus norvegicus (Rat).